Consider the following 431-residue polypeptide: Neuronal pentraxin-2 (431 aa).

A signal peptide spans 1–15; sequence MLALLAASVALAVAA. Asparagine 148 and asparagine 189 each carry an N-linked (GlcNAc...) asparagine glycan. In terms of domain architecture, Pentraxin (PTX) spans 223–424; sequence DAFKVSLPLR…GASKWPVETC (202 aa). An intrachain disulfide couples cysteine 253 to cysteine 313. Ca(2+) contacts are provided by asparagine 277, glutamate 355, glutamine 356, aspartate 357, and glutamine 367. Asparagine 393 is a glycosylation site (N-linked (GlcNAc...) asparagine).

As to quaternary structure, homooligomer or heterooligomer (probably pentamer) with neuronal pentraxin receptor (NPTXR). The cofactor is Ca(2+). As to expression, brain, pancreas, liver, heart and skeletal muscle. Highest levels are seen in the testis.

It localises to the secreted. Its function is as follows. Likely to play role in the modification of cellular properties that underlie long-term plasticity. Binds to agar matrix in a calcium-dependent manner. This chain is Neuronal pentraxin-2 (NPTX2), found in Homo sapiens (Human).